The sequence spans 249 residues: tRNA pseudouridine synthase A (249 aa).

Catalysis depends on Asp-54, which acts as the Nucleophile. Residue Tyr-111 participates in substrate binding.

Belongs to the tRNA pseudouridine synthase TruA family. As to quaternary structure, homodimer.

It catalyses the reaction uridine(38/39/40) in tRNA = pseudouridine(38/39/40) in tRNA. Formation of pseudouridine at positions 38, 39 and 40 in the anticodon stem and loop of transfer RNAs. The protein is tRNA pseudouridine synthase A of Mycoplasma capricolum subsp. capricolum (strain California kid / ATCC 27343 / NCTC 10154).